We begin with the raw amino-acid sequence, 83 residues long: Small ribosomal subunit protein bS16 (83 aa).

It belongs to the bacterial ribosomal protein bS16 family.

The protein is Small ribosomal subunit protein bS16 of Azotobacter vinelandii (strain DJ / ATCC BAA-1303).